The primary structure comprises 723 residues: Probable G-protein coupled receptor 149 (723 aa).

At 1-31 (MSVMPSNLSLNGTSFFAENHSIMDKPNEQRT) the chain is on the extracellular side. Residues N7, N11, and N19 are each glycosylated (N-linked (GlcNAc...) asparagine). The chain crosses the membrane as a helical span at residues 32–52 (LNVFLFCSTFIIAFTVLLGSI). The Cytoplasmic segment spans residues 53 to 69 (YSLVSLLKLQNKSTISM). The chain crosses the membrane as a helical span at residues 70–90 (IVTSLSIDDLISIVPVIIFML). Topologically, residues 91–106 (TQWSSDALPQPLCTTS) are extracellular. C103 and C181 are oxidised to a cystine. Residues 107–127 (ALIYLFQGISSNLKGSLIVSY) traverse the membrane as a helical segment. Residues 128–148 (NFYSINKTETMNCSASKRRVS) are Cytoplasmic-facing. A helical transmembrane segment spans residues 149-169 (MVWAILSIWIVSLLICILPLC). Topologically, residues 170–188 (GWGKYIPTTWGCFTDHASS) are extracellular. A helical membrane pass occupies residues 189-209 (YILFLFIVYSLCFCLLTVLSV). At 210 to 306 (PLTYQLLCSD…SFTVGFAQKR (97 aa)) the chain is on the cytoplasmic side. A helical transmembrane segment spans residues 307 to 327 (FSLILALTKVILWLPMMIQMV). At 328–338 (VQHITGYQSFS) the chain is on the extracellular side. A helical transmembrane segment spans residues 339-359 (FETLSFLLTLLAATVTPVFVL). Over 360–723 (SEHWIHLPCG…RKREEDGNSN (364 aa)) the chain is Cytoplasmic. The interval 451-513 (TTDSARPGPA…ERRLSHEEGH (63 aa)) is disordered. Basic and acidic residues predominate over residues 501–513 (EGPERRLSHEEGH).

It belongs to the G-protein coupled receptor 1 family. As to expression, specific expression in peripheral nervous system, including nerve growth factor-dependent sensory and sympathetic neurons, as well as enteric neurons.

It is found in the cell membrane. In terms of biological role, orphan receptor. This chain is Probable G-protein coupled receptor 149 (GPR149), found in Gallus gallus (Chicken).